The following is a 305-amino-acid chain: UPF0450 protein C17orf58 homolog (305 aa).

The N-terminal stretch at 1–22 (MTARALWLLCLIVGWSPEAPVA) is a signal peptide. The disordered stretch occupies residues 18–160 (EAPVAERKAP…DREPETQSCA (143 aa)). Residues 21–39 (VAERKAPPPHRKPDSRETP) show a composition bias toward basic and acidic residues. 3 disulfide bridges follow: C159–C233, C163–C237, and C174–C304. The 146-residue stretch at 159–304 (CARACSADAD…QVRGATHTQC (146 aa)) folds into the NTR domain.

Belongs to the UPF0450 family.

The chain is UPF0450 protein C17orf58 homolog from Mus musculus (Mouse).